The chain runs to 1363 residues: Kinesin-like protein kif7 (1363 aa).

One can recognise a Kinesin motor domain in the interval 15–347 (AVQVAVRVRP…LNYAKRARNI (333 aa)). An ATP-binding site is contributed by 94-101 (GQTGSGKT). Coiled-coil stretches lie at residues 358-385 (EPDR…SETR) and 491-552 (EDWR…LLAQ). The span at 603-622 (DSSSYSEQTQWDGTHGNTHC) shows a compositional bias: polar residues. Residues 603–642 (DSSSYSEQTQWDGTHGNTHCESSRKLNRDEDGHMQTTRDK) form a disordered region. A compositionally biased stretch (basic and acidic residues) spans 623-640 (ESSRKLNRDEDGHMQTTR). 2 coiled-coil regions span residues 714-1068 (LLQA…AAIE) and 1116-1225 (DKVV…LREM). A disordered region spans residues 1314 to 1346 (IVQPGMNSTHWSGSTSLPVTRPRREPRRSSLNT). Residues 1318-1331 (GMNSTHWSGSTSLP) show a composition bias toward polar residues.

It belongs to the TRAFAC class myosin-kinesin ATPase superfamily. Kinesin family. KIF27 subfamily. As to quaternary structure, binds microtubules. Interacts with gli1 and sufu.

Its subcellular location is the cytoplasm. The protein localises to the cytoskeleton. It localises to the cell projection. The protein resides in the cilium. Functionally, acts downstream of smo as an intracellular repressor of hedgehog signaling pathway, mainly through the suppression of gli1 activity. This negative regulatory effect is enhanced in conjunction with the suppressor of fused (sufu) protein. Positively regulates gli2a activity by promoting its dissociation from sufu. Involved in the regulation of microtubular dynamics. The polypeptide is Kinesin-like protein kif7 (kif7) (Danio rerio (Zebrafish)).